A 468-amino-acid polypeptide reads, in one-letter code: Elongation factor 1-alpha (468 aa).

The tr-type G domain occupies Lys-6 to Ser-244. The segment at Gly-15–Ser-22 is G1. Gly-15–Ser-22 lines the GTP pocket. Positions Gly-71 to Asp-75 are G2. The G3 stretch occupies residues Asp-92–Gly-95. GTP is bound by residues Asp-92–His-96 and Asn-154–Asp-157. Residues Asn-154–Asp-157 are G4. Residues Ser-195 to Trp-197 are G5. 5-glutamyl glycerylphosphorylethanolamine occurs at positions 303 and 376.

Belongs to the TRAFAC class translation factor GTPase superfamily. Classic translation factor GTPase family. EF-Tu/EF-1A subfamily.

Its subcellular location is the cytoplasm. Functionally, this protein promotes the GTP-dependent binding of aminoacyl-tRNA to the A-site of ribosomes during protein biosynthesis. This Hydra vulgaris (Hydra) protein is Elongation factor 1-alpha.